The following is a 253-amino-acid chain: Major prion protein (253 aa).

Positions 1-22 (MANLGCWMLVLFVATWSDLGLC) are cleaved as a signal peptide. Residues 23-38 (KKRPKPGGWNTGGSRY) are interaction with ADGRG6. An interaction with GRB2, ERI3 and SYN1 region spans residues 23–230 (KKRPKPGGWN…ESQAYYQRGS (208 aa)). Positions 26–108 (PKPGGWNTGG…WNKPSKPKTN (83 aa)) are disordered. Repeat copies occupy residues 51 to 59 (PQGGGGWGQ), 60 to 67 (PHGGGWGQ), 68 to 75 (PHGGGWGQ), 76 to 83 (PHGGGWGQ), and 84 to 91 (PHGGGWGQ). A 5 X 8 AA tandem repeats of P-H-G-G-G-W-G-Q region spans residues 51–91 (PQGGGGWGQPHGGGWGQPHGGGWGQPHGGGWGQPHGGGWGQ). Gly residues predominate over residues 52–95 (QGGGGWGQPHGGGWGQPHGGGWGQPHGGGWGQPHGGGWGQGGGT). Cu(2+)-binding residues include His61, Gly62, Gly63, His69, Gly70, Gly71, His77, Gly78, Gly79, His85, Gly86, and Gly87. Cys179 and Cys214 form a disulfide bridge. Asn181 and Asn197 each carry an N-linked (GlcNAc...) asparagine glycan. A lipid anchor (GPI-anchor amidated serine) is attached at Ser230. The propeptide at 231 to 253 (SMVLFSSPPVILLISFLIFLIVG) is removed in mature form.

Belongs to the prion family. In terms of assembly, monomer and homodimer. Has a tendency to aggregate into amyloid fibrils containing a cross-beta spine, formed by a steric zipper of superposed beta-strands. Soluble oligomers may represent an intermediate stage on the path to fibril formation. Copper binding may promote oligomerization. Interacts with GRB2, APP, ERI3/PRNPIP and SYN1. Mislocalized cytosolically exposed PrP interacts with MGRN1; this interaction alters MGRN1 subcellular location and causes lysosomal enlargement. Interacts with APP. Interacts with KIAA1191. Interacts with ADGRG6.

It is found in the cell membrane. It localises to the golgi apparatus. Its primary physiological function is unclear. May play a role in neuronal development and synaptic plasticity. May be required for neuronal myelin sheath maintenance. May promote myelin homeostasis through acting as an agonist for ADGRG6 receptor. May play a role in iron uptake and iron homeostasis. Soluble oligomers are toxic to cultured neuroblastoma cells and induce apoptosis (in vitro). Association with GPC1 (via its heparan sulfate chains) targets PRNP to lipid rafts. Also provides Cu(2+) or Zn(2+) for the ascorbate-mediated GPC1 deaminase degradation of its heparan sulfate side chains. This is Major prion protein (PRNP) from Gorilla gorilla gorilla (Western lowland gorilla).